The primary structure comprises 273 residues: Octanoyltransferase LipM (273 aa).

One can recognise a BPL/LPL catalytic domain in the interval 32-240 (GEIPPTLRFY…GFSEILNIEL (209 aa)). Cys-142 serves as the catalytic Acyl-thioester intermediate.

It belongs to the octanoyltransferase LipM family. As to quaternary structure, monomer.

The catalysed reaction is octanoyl-[ACP] + L-lysyl-[protein] = N(6)-octanoyl-L-lysyl-[protein] + holo-[ACP] + H(+). The protein operates within protein modification; protein lipoylation via endogenous pathway; protein N(6)-(lipoyl)lysine from octanoyl-[acyl-carrier-protein]. Its function is as follows. Catalyzes the transfer of endogenously produced octanoic acid from octanoyl-acyl-carrier-protein onto the lipoyl domain of GcvH, an intermediate carrier during protein lipoylation. This is Octanoyltransferase LipM from Oceanobacillus iheyensis (strain DSM 14371 / CIP 107618 / JCM 11309 / KCTC 3954 / HTE831).